Here is a 736-residue protein sequence, read N- to C-terminus: Copper-exporting P-type ATPase (736 aa).

Basic residues predominate over residues 1 to 17; the sequence is MKHDHHQGHTHSGKGHA. Residues 1 to 32 form a disordered region; the sequence is MKHDHHQGHTHSGKGHACHHEHNSPKTQQASS. 6 helical membrane-spanning segments follow: residues 85 to 105, 114 to 134, 149 to 169, 183 to 203, 341 to 361, and 369 to 389; these read FWIALMLTIPVVILEMGGHGL, SSWIQLLLATPVVLWGGWPFF, FTLIAMGIGVAWIYSMVAVLW, VVAVYFEAAAVITTLVLLGQV, GWFVPAVILVAVLSFIVWALL, and YGLIAAVSVLIIACPCALGLA. Catalysis depends on aspartate 426, which acts as the 4-aspartylphosphate intermediate. Mg(2+)-binding residues include aspartate 426, threonine 428, and aspartate 624. The next 2 membrane-spanning stretches (helical) occupy residues 682–702 and 706–726; these read LFFAFIYNVLGVPLAAGVLYP and LLLSPMIAAAAMALSSVSVII.

The protein belongs to the cation transport ATPase (P-type) (TC 3.A.3) family. Type IB subfamily. Mg(2+) is required as a cofactor.

The protein localises to the cell inner membrane. It carries out the reaction Cu(+)(in) + ATP + H2O = Cu(+)(out) + ADP + phosphate + H(+). Activated by phospholipids, Mg(2+) and Cu(+). In terms of biological role, couples the hydrolysis of ATP with the export of copper. The protein is Copper-exporting P-type ATPase of Legionella pneumophila subsp. pneumophila (strain Philadelphia 1 / ATCC 33152 / DSM 7513).